The sequence spans 440 residues: Transposon Ty1-DR2 Gag polyprotein (440 aa).

2 stretches are compositionally biased toward polar residues: residues 1 to 31 and 137 to 168; these read MESQQLSQHSPISHGSACASVTSKEVQTTQD and VGTHLNTPSPESGNSFPDSSSAKSNMTSTNQH. Disordered regions lie at residues 1 to 75, 137 to 174, and 350 to 440; these read MESQ…PQAA, VGTHLNTPSPESGNSFPDSSSAKSNMTSTNQHVRPPPI, and QQES…PGTY. The RNA-binding stretch occupies residues 299 to 401; the sequence is NNGIPINNKV…NSQSRTARAH (103 aa). Residues 363-372 are compositionally biased toward basic and acidic residues; sequence SPSDEKKDSR. Positions 373-409 are enriched in polar residues; sequence TYTNTTKPKSITRNSQKPNNSQSRTARAHNVSTSNNF. Residues 429–440 show a composition bias toward basic and acidic residues; the sequence is NKHDLHLRPGTY.

In terms of assembly, homotrimer.

Its subcellular location is the cytoplasm. In terms of biological role, capsid protein (CA) is the structural component of the virus-like particle (VLP), forming the shell that encapsulates the retrotransposons dimeric RNA genome. The particles are assembled from trimer-clustered units and there are holes in the capsid shells that allow for the diffusion of macromolecules. CA also has nucleocapsid-like chaperone activity, promoting primer tRNA(i)-Met annealing to the multipartite primer-binding site (PBS), dimerization of Ty1 RNA and initiation of reverse transcription. The protein is Transposon Ty1-DR2 Gag polyprotein (TY1A-DR2) of Saccharomyces cerevisiae (strain ATCC 204508 / S288c) (Baker's yeast).